Consider the following 175-residue polypeptide: ATP-dependent protease subunit HslV (175 aa).

Thr2 is a catalytic residue. Na(+)-binding residues include Ala159, Asp162, and Thr165.

Belongs to the peptidase T1B family. HslV subfamily. In terms of assembly, a double ring-shaped homohexamer of HslV is capped on each side by a ring-shaped HslU homohexamer. The assembly of the HslU/HslV complex is dependent on binding of ATP.

It is found in the cytoplasm. It carries out the reaction ATP-dependent cleavage of peptide bonds with broad specificity.. Allosterically activated by HslU binding. Functionally, protease subunit of a proteasome-like degradation complex believed to be a general protein degrading machinery. In Ligilactobacillus salivarius (strain UCC118) (Lactobacillus salivarius), this protein is ATP-dependent protease subunit HslV.